A 151-amino-acid polypeptide reads, in one-letter code: UPF0735 ACT domain-containing protein SH1278 (151 aa).

An ACT domain is found at 74–149 (TLILYVNDIV…HVSKVELISM (76 aa)).

This sequence belongs to the UPF0735 family.

The sequence is that of UPF0735 ACT domain-containing protein SH1278 from Staphylococcus haemolyticus (strain JCSC1435).